The sequence spans 167 residues: Endoribonuclease YbeY (167 aa).

Residues H131, H135, and H141 each coordinate Zn(2+).

The protein belongs to the endoribonuclease YbeY family. It depends on Zn(2+) as a cofactor.

It is found in the cytoplasm. Functionally, single strand-specific metallo-endoribonuclease involved in late-stage 70S ribosome quality control and in maturation of the 3' terminus of the 16S rRNA. This chain is Endoribonuclease YbeY, found in Rickettsia prowazekii (strain Madrid E).